The following is a 278-amino-acid chain: Envelope glycoprotein L (278 aa).

The signal sequence occupies residues 1–30 (MCRRPDCGFSFSPGPVILLWCCLLLPIVSS). The region spanning 43 to 256 (VPAECPELTR…DKYYAGLPPE (214 aa)) is the gL betaherpesvirus-type domain. Cys154 and Cys159 are joined by a disulfide.

It belongs to the herpesviridae glycoprotein L (gL) family. Betaherpesvirinae gL subfamily. As to quaternary structure, interacts with glycoprotein H (gH); this interaction is necessary for the correct processing and cell surface expression of gH. Forms the envelope pentamer complex (PC) composed of gH, gL, UL128, UL130, and UL131A. The pentamer interacts with host NRP2. Forms the envelope trimer complex composed of gH, gL, and gO. The trimer interacts with host PDGFRA. The trimer also interacts with host EPHA2.

The protein resides in the virion membrane. It is found in the host cell membrane. Its subcellular location is the host Golgi apparatus. The protein localises to the host trans-Golgi network. The heterodimer glycoprotein H-glycoprotein L is required for the fusion of viral and plasma membranes leading to virus entry into the host cell. Acts as a functional inhibitor of gH and maintains gH in an inhibited form. Upon binding to host integrins, gL dissociates from gH leading to activation of the viral fusion glycoproteins gB and gH. In human cytomegalovirus, forms two distincts complexes to mediate viral entry, a trimer and a pentamer at the surface of the virion envelope. The gH-gL-gO trimer is required for infection in fibroblasts by interacting with host PDGFRA, and in glioblastoma cells by interacting with host EPHA2. The gH-gL-UL128-UL130-UL131A pentamer is essential for viral entry in epithelial, endothelial and myeloid cells via interaction with host NRP2. This chain is Envelope glycoprotein L, found in Homo sapiens (Human).